The chain runs to 145 residues: Large ribosomal subunit protein uL15 (145 aa).

The segment at 1 to 43 (MRLNTIKPGAGSKSAAKRVGRGIGSGLGKTCGRGHKGQKSRAG) is disordered. Residues 21 to 31 (RGIGSGLGKTC) are compositionally biased toward gly residues.

The protein belongs to the universal ribosomal protein uL15 family. In terms of assembly, part of the 50S ribosomal subunit.

Functionally, binds to the 23S rRNA. The chain is Large ribosomal subunit protein uL15 from Aromatoleum aromaticum (strain DSM 19018 / LMG 30748 / EbN1) (Azoarcus sp. (strain EbN1)).